Consider the following 306-residue polypeptide: Phenylcoumaran benzylic ether reductase POP1 (306 aa).

NADP(+)-binding positions include 9–15, Arg-34, and Lys-43; that span reads GGTGYIG. Lys-131 serves as the catalytic Proton acceptor. Arg-135 contributes to the NADP(+) binding site.

This sequence belongs to the NmrA-type oxidoreductase family. Isoflavone reductase subfamily.

It carries out the reaction (-)-dehydrodiconiferyl alcohol + NADPH + H(+) = (S)-isodihydrodehydrodiconiferyl alcohol + NADP(+). The catalysed reaction is (+)-dehydrodiconiferyl alcohol + NADPH + H(+) = (R)-isodihydrodehydrodiconiferyl alcohol + NADP(+). The enzyme catalyses (2R,3S)-dihydrodehydrodiconiferyl alcohol + NADPH + H(+) = (S)-tetrahydrodehydrodiconiferyl alcohol + NADP(+). It catalyses the reaction (2S,3R)-dihydrodehydrodiconiferyl alcohol + NADPH + H(+) = (R)-tetrahydrodehydrodiconiferyl alcohol + NADP(+). Its function is as follows. Oxidoreductase involved in lignan biosynthesis. Catalyzes the NADPH-dependent reduction of phenylcoumaran benzylic ethers. Converts dehydrodiconiferyl alcohol (DDC) to isodihydrodehydrodiconiferyl alcohol (IDDDC), and dihydrodehydrodiconiferyl alcohol (DDDC) to tetrahydrodehydrodiconiferyl alcohol (TDDC). This Populus trichocarpa (Western balsam poplar) protein is Phenylcoumaran benzylic ether reductase POP1.